The primary structure comprises 642 residues: Probable glutamate--tRNA ligase, cytoplasmic (642 aa).

Arg152 to Pro154 serves as a coordination point for L-glutamate. The 'HIGH' region signature appears at Pro157–Ala166. His162 is an ATP binding site. L-glutamate-binding positions include Asp188, Tyr326–Cys330, and Arg344. ATP is bound by residues Glu347 and Val382–Arg386. Positions Val382–Arg386 match the 'KMSKS' region motif.

Belongs to the class-I aminoacyl-tRNA synthetase family. Glutamate--tRNA ligase type 2 subfamily.

Its subcellular location is the cytoplasm. The enzyme catalyses tRNA(Glu) + L-glutamate + ATP = L-glutamyl-tRNA(Glu) + AMP + diphosphate. The chain is Probable glutamate--tRNA ligase, cytoplasmic from Encephalitozoon cuniculi (strain GB-M1) (Microsporidian parasite).